Consider the following 237-residue polypeptide: D-aminoacyl-tRNA deacylase (237 aa).

The protein belongs to the DtdA deacylase family. Monomer. Zn(2+) is required as a cofactor.

The enzyme catalyses a D-aminoacyl-tRNA + H2O = a tRNA + a D-alpha-amino acid + H(+). The catalysed reaction is glycyl-tRNA(Ala) + H2O = tRNA(Ala) + glycine + H(+). In terms of biological role, D-aminoacyl-tRNA deacylase with broad substrate specificity. By recycling D-aminoacyl-tRNA to D-amino acids and free tRNA molecules, this enzyme counteracts the toxicity associated with the formation of D-aminoacyl-tRNA entities in vivo. The polypeptide is D-aminoacyl-tRNA deacylase (Saccharolobus islandicus (strain Y.N.15.51 / Yellowstone #2) (Sulfolobus islandicus)).